The sequence spans 263 residues: S-adenosylmethionine decarboxylase proenzyme (263 aa).

The Schiff-base intermediate with substrate; via pyruvic acid role is filled by serine 113. Pyruvic acid (Ser); by autocatalysis is present on serine 113. The Proton acceptor; for processing activity role is filled by histidine 118. Cysteine 141 acts as the Proton donor; for catalytic activity in catalysis.

This sequence belongs to the prokaryotic AdoMetDC family. Type 2 subfamily. Heterooctamer of four alpha and four beta chains arranged as a tetramer of alpha/beta heterodimers. The cofactor is pyruvate. In terms of processing, is synthesized initially as an inactive proenzyme. Formation of the active enzyme involves a self-maturation process in which the active site pyruvoyl group is generated from an internal serine residue via an autocatalytic post-translational modification. Two non-identical subunits are generated from the proenzyme in this reaction, and the pyruvate is formed at the N-terminus of the alpha chain, which is derived from the carboxyl end of the proenzyme. The post-translation cleavage follows an unusual pathway, termed non-hydrolytic serinolysis, in which the side chain hydroxyl group of the serine supplies its oxygen atom to form the C-terminus of the beta chain, while the remainder of the serine residue undergoes an oxidative deamination to produce ammonia and the pyruvoyl group blocking the N-terminus of the alpha chain.

It catalyses the reaction S-adenosyl-L-methionine + H(+) = S-adenosyl 3-(methylsulfanyl)propylamine + CO2. It functions in the pathway amine and polyamine biosynthesis; S-adenosylmethioninamine biosynthesis; S-adenosylmethioninamine from S-adenosyl-L-methionine: step 1/1. Catalyzes the decarboxylation of S-adenosylmethionine to S-adenosylmethioninamine (dcAdoMet), the propylamine donor required for the synthesis of the polyamines spermine and spermidine from the diamine putrescine. The protein is S-adenosylmethionine decarboxylase proenzyme of Marinobacter nauticus (strain ATCC 700491 / DSM 11845 / VT8) (Marinobacter aquaeolei).